The sequence spans 486 residues: Probable FAD-binding monooxygenase ltbD (486 aa).

Positions 186–243 (PAGDGGTNDQGPSRAQSTASSGGSGRPRSTESPQSGAQASTTPTSPPTTQSTGDDPAA) are disordered. Residues 194–206 (DQGPSRAQSTASS) are compositionally biased toward polar residues. The segment covering 220–241 (SGAQASTTPTSPPTTQSTGDDP) has biased composition (low complexity).

It belongs to the FAD-binding monooxygenase family. Homodimer. It depends on FAD as a cofactor.

Probable FAD-binding monooxygenase; part of the gene cluster that mediates the biosynthesis of luteodienoside A, a glycosylated polyketide consisting of an unusual 1-O-beta-D-glucopyranosyl-myo-inositol (glucinol) ester of 3-hydroxy-2,2,4-trimethylocta-4,6-dienoic acid. The HR-PKS ltbA produces the trimethylated polyketide chain from acetyl-CoA, malonyl-CoA and S-adenosylmethionine (SAM), and the ltbA cAT domain then uses glucinol produced by the glycosyltransferase ltbB as an offloading substrate to release luteodienoside A. Since ltbA and ltbB are sufficient for the biosynthesis of luteodienoside A, the functions of the methyltransferase ltbC and the FAD-binding monooxygenase ltbD within the pathway remain obscur. The chain is Probable FAD-binding monooxygenase ltbD from Aspergillus luteorubrus.